Here is a 484-residue protein sequence, read N- to C-terminus: Ubiquinone biosynthesis monooxygenase COQ6, mitochondrial (484 aa).

Residues 1–41 constitute a mitochondrion transit peptide; the sequence is MLSLAKAKLAVVGIGRQCVAVRTLNGARAVHRSFSSSEHDQ.

This sequence belongs to the UbiH/COQ6 family. In terms of assembly, component of a multi-subunit COQ enzyme complex, composed of at least coq3, coq4, coq5, coq6, coq7 and coq9. Interacts with coq8b and coq7. FAD serves as cofactor.

Its subcellular location is the mitochondrion inner membrane. The protein localises to the golgi apparatus. The protein resides in the cell projection. The enzyme catalyses a 4-hydroxy-3-(all-trans-polyprenyl)benzoate + 2 reduced [2Fe-2S]-[ferredoxin] + O2 + 2 H(+) = a 3,4-dihydroxy-5-(all-trans-polyprenyl)benzoate + 2 oxidized [2Fe-2S]-[ferredoxin] + H2O. It catalyses the reaction a 2-methoxy-6-(all-trans-polyprenyl)phenol + 2 reduced [2Fe-2S]-[ferredoxin] + O2 + 2 H(+) = a 2-methoxy-6-(all-trans-polyprenyl)benzene-1,4-diol + 2 oxidized [2Fe-2S]-[ferredoxin] + H2O. Its pathway is cofactor biosynthesis; ubiquinone biosynthesis. In terms of biological role, FAD-dependent monooxygenase required for two non-consecutive steps during ubiquinone biosynthesis. Required for the C5-ring hydroxylation during ubiquinone biosynthesis by catalyzing the hydroxylation of 4-hydroxy-3-(all-trans-polyprenyl)benzoic acid to 3,4-dihydroxy-5-(all-trans-polyprenyl)benzoic acid. Also acts downstream of coq4, for the C1-hydroxylation during ubiquinone biosynthesis by catalyzing the hydroxylation of 2-methoxy-6-(all-trans-polyprenyl)phenol to 2-methoxy-6-(all-trans-polyprenyl)benzene-1,4-diol. The electrons required for the hydroxylation reaction are funneled indirectly to coq6 from NADPH via a ferredoxin/ferredoxin reductase system. This chain is Ubiquinone biosynthesis monooxygenase COQ6, mitochondrial, found in Danio rerio (Zebrafish).